A 207-amino-acid chain; its full sequence is 8-oxoguanine DNA glycosylase/AP lyase (207 aa).

Residues K128 and D146 contribute to the active site.

Belongs to the type-2 OGG1 family.

It carries out the reaction 2'-deoxyribonucleotide-(2'-deoxyribose 5'-phosphate)-2'-deoxyribonucleotide-DNA = a 3'-end 2'-deoxyribonucleotide-(2,3-dehydro-2,3-deoxyribose 5'-phosphate)-DNA + a 5'-end 5'-phospho-2'-deoxyribonucleoside-DNA + H(+). Catalyzes the excision of an oxidatively damaged form of guanine (7,8-dihydro-8-oxoguanine = 8-oxoG) from DNA. Also cleaves the DNA backbone at apurinic/apyrimidinic sites (AP sites). This is 8-oxoguanine DNA glycosylase/AP lyase from Saccharolobus islandicus (strain Y.N.15.51 / Yellowstone #2) (Sulfolobus islandicus).